A 495-amino-acid chain; its full sequence is Glutamyl-tRNA(Gln) amidotransferase subunit A (495 aa).

Active-site charge relay system residues include Lys-79 and Ser-159. Catalysis depends on Ser-183, which acts as the Acyl-ester intermediate.

Belongs to the amidase family. GatA subfamily. In terms of assembly, heterotrimer of A, B and C subunits.

It carries out the reaction L-glutamyl-tRNA(Gln) + L-glutamine + ATP + H2O = L-glutaminyl-tRNA(Gln) + L-glutamate + ADP + phosphate + H(+). Its function is as follows. Allows the formation of correctly charged Gln-tRNA(Gln) through the transamidation of misacylated Glu-tRNA(Gln) in organisms which lack glutaminyl-tRNA synthetase. The reaction takes place in the presence of glutamine and ATP through an activated gamma-phospho-Glu-tRNA(Gln). The chain is Glutamyl-tRNA(Gln) amidotransferase subunit A from Gluconobacter oxydans (strain 621H) (Gluconobacter suboxydans).